The primary structure comprises 326 residues: MHRTTRIKITELNPHLMCVLCGGYFIDATTIIECLHSFCKTCIVRYLETSKYCPICDVQVHKTRPLLNIRSDKTLQDIVYKLVPGLFKNEMKRRRDFYAAHPSADAANGSNEDRGEVADEDKRIITDDEIISLSIEFFDQNRLERKGNKEKEKSKEEVNDKRYLRCPAAMTVMHLRKFLRSKMDIPNTFQIDVMYEEEPLKDYYTLMDIAYIYTWRRNGPLPLKYRVRPTCKRMKIGHQREGLSNSGELESDSGSDKASSPAGGLPSTSSCLPSPSTPVQSPHPQFPHISSTMNGTSSSPGSNHQSSFTNRARKSSINGSSATSSG.

The RING-type zinc finger occupies Cys-18–Asp-57. Residues Lys-81–Arg-95 carry the Nuclear localization signal motif. Residues Arg-162–Lys-182 form an interaction with PHC2 region. Positions Leu-164–Arg-228 are interaction with E4F1. The disordered stretch occupies residues Ile-236–Gly-326. The span at Leu-265–Pro-278 shows a compositional bias: low complexity. Residues Val-279–Asn-310 are compositionally biased toward polar residues. The segment covering Ser-315–Gly-326 has biased composition (low complexity).

Component of a PRC1-like complex.

The protein localises to the nucleus. It is found in the cytoplasm. Functionally, component of a Polycomb group (PcG) multiprotein PRC1-like complex, a complex class required to maintain the transcriptionally repressive state of many genes, including Hox genes, throughout development. PcG PRC1 complex acts via chromatin remodeling and modification of histones; it mediates monoubiquitination of histone H2A 'Lys-119', rendering chromatin heritably changed in its expressibility. In the PRC1-like complex, regulates the E3 ubiquitin-protein ligase activity of RNF2/RING2. In Gallus gallus (Chicken), this protein is Polycomb complex protein BMI-1 (BMI1).